The primary structure comprises 1073 residues: Carbamoyl phosphate synthase large chain (1073 aa).

The carboxyphosphate synthetic domain stretch occupies residues 2 to 403 (PKRTDIKSIL…SLQKALRGLE (402 aa)). ATP contacts are provided by arginine 129, arginine 169, glycine 175, glycine 176, glutamate 208, leucine 210, glutamate 215, glycine 241, isoleucine 242, histidine 243, glutamine 285, and glutamate 299. In terms of domain architecture, ATP-grasp 1 spans 133 to 328 (DVAMKKIGLE…IAKVAAKLAV (196 aa)). Mg(2+)-binding residues include glutamine 285, glutamate 299, and asparagine 301. Mn(2+) contacts are provided by glutamine 285, glutamate 299, and asparagine 301. The segment at 404–553 (VGATGFDPKV…YSTYEEECEA (150 aa)) is oligomerization domain. Residues 554-936 (NPSTDREKIM…AFAKAQLGSN (383 aa)) form a carbamoyl phosphate synthetic domain region. An ATP-grasp 2 domain is found at 679–870 (QHAVDRLKLK…LAKVAARVMA (192 aa)). Arginine 715, histidine 754, leucine 756, glutamate 761, glycine 786, valine 787, histidine 788, serine 789, glutamine 829, and glutamate 841 together coordinate ATP. 3 residues coordinate Mg(2+): glutamine 829, glutamate 841, and asparagine 843. Positions 829, 841, and 843 each coordinate Mn(2+). The MGS-like domain occupies 937–1073 (STMKKHGRAL…SVQEMHAQIK (137 aa)). An allosteric domain region spans residues 937-1073 (STMKKHGRAL…SVQEMHAQIK (137 aa)).

Belongs to the CarB family. In terms of assembly, composed of two chains; the small (or glutamine) chain promotes the hydrolysis of glutamine to ammonia, which is used by the large (or ammonia) chain to synthesize carbamoyl phosphate. Tetramer of heterodimers (alpha,beta)4. It depends on Mg(2+) as a cofactor. Mn(2+) is required as a cofactor.

The enzyme catalyses hydrogencarbonate + L-glutamine + 2 ATP + H2O = carbamoyl phosphate + L-glutamate + 2 ADP + phosphate + 2 H(+). It carries out the reaction hydrogencarbonate + NH4(+) + 2 ATP = carbamoyl phosphate + 2 ADP + phosphate + 2 H(+). The protein operates within amino-acid biosynthesis; L-arginine biosynthesis; carbamoyl phosphate from bicarbonate: step 1/1. Its pathway is pyrimidine metabolism; UMP biosynthesis via de novo pathway; (S)-dihydroorotate from bicarbonate: step 1/3. In terms of biological role, large subunit of the glutamine-dependent carbamoyl phosphate synthetase (CPSase). CPSase catalyzes the formation of carbamoyl phosphate from the ammonia moiety of glutamine, carbonate, and phosphate donated by ATP, constituting the first step of 2 biosynthetic pathways, one leading to arginine and/or urea and the other to pyrimidine nucleotides. The large subunit (synthetase) binds the substrates ammonia (free or transferred from glutamine from the small subunit), hydrogencarbonate and ATP and carries out an ATP-coupled ligase reaction, activating hydrogencarbonate by forming carboxy phosphate which reacts with ammonia to form carbamoyl phosphate. The sequence is that of Carbamoyl phosphate synthase large chain from Escherichia coli O157:H7.